The sequence spans 125 residues: Ribonuclease P protein component (125 aa).

The protein belongs to the RnpA family. In terms of assembly, consists of a catalytic RNA component (M1 or rnpB) and a protein subunit.

The catalysed reaction is Endonucleolytic cleavage of RNA, removing 5'-extranucleotides from tRNA precursor.. In terms of biological role, RNaseP catalyzes the removal of the 5'-leader sequence from pre-tRNA to produce the mature 5'-terminus. It can also cleave other RNA substrates such as 4.5S RNA. The protein component plays an auxiliary but essential role in vivo by binding to the 5'-leader sequence and broadening the substrate specificity of the ribozyme. This chain is Ribonuclease P protein component, found in Rhodococcus jostii (strain RHA1).